The chain runs to 460 residues: Lysosomal proton-coupled steroid conjugate and bile acid symporter SLC46A3 (460 aa).

A signal peptide spans 1–25 (MKISFIEPAILLNAFAMTLTIPLTA). The Extracellular portion of the chain corresponds to 26–73 (QYVYRRIWEETGNYTFASNSNGSECDQNKSSSIFAFREEVQKKASLFN). N38, N46, and N53 each carry an N-linked (GlcNAc...) asparagine glycan. Residues 74–94 (LQVEMSALIPGLVSTFMLLAS) form a helical membrane-spanning segment. Over 95-111 (SDNHGRKLPMVLSSLGS) the chain is Cytoplasmic. A helical transmembrane segment spans residues 112–132 (LGTNTWLCMMSYFDLPLQLLI). Residues 133 to 135 (AST) are Extracellular-facing. Residues 136–156 (FIGALFGNYTTFWGACFAYIV) form a helical membrane-spanning segment. The Cytoplasmic segment spans residues 157-170 (DQQKEYKHRIIRIA). Residues 171–191 (ILDFMLGVVTGLTGLSSGYFI) form a helical membrane-spanning segment. Residues 192-195 (RELG) are Extracellular-facing. The helical transmembrane segment at 196–216 (FVWSYFITAMVLIVNLAYILF) threads the bilayer. Topologically, residues 217-257 (FLNDPIKESSSQIVTMSCIESLKDLFYRTYMLFKNGSSKRQ) are cytoplasmic. The chain crosses the membrane as a helical span at residues 258-278 (ALLCLLIFTLVIYFFVIIGIS). Over 279–301 (PIFTLYELGPPLCWNEVYIGYGS) the chain is Extracellular. Residues 302 to 322 (ALGSVSFLSSFLGIWLFSYCL) form a helical membrane-spanning segment. At 323-324 (KD) the chain is on the cytoplasmic side. The chain crosses the membrane as a helical span at residues 325–345 (IHIAYIGIFTTMVGMTLAAFT). Topologically, residues 346–347 (RT) are extracellular. A helical membrane pass occupies residues 348-368 (TLMMFLVRIPFIFTIMPLSVL). Residues 369 to 381 (RSMLSKVVHSTEQ) are Cytoplasmic-facing. The helical transmembrane segment at 382–402 (GALFACIAFLETLAGVTSTSA) threads the bilayer. At 403-410 (YSGIYSAT) the chain is on the extracellular side. Residues 411-431 (VAWYPGFIFLLSAGLLVLPAI) traverse the membrane as a helical segment. At 432–460 (SLCCVKSIGWEEGSYTLLVHEEPSEHTSD) the chain is on the cytoplasmic side. The Tyrosine-based lysosomal-sorting motif motif lies at 446-449 (YTLL).

This sequence belongs to the major facilitator superfamily. SLC46A family. In terms of tissue distribution, expressed in liver, kidney, small intestine and colon.

The protein localises to the lysosome membrane. It carries out the reaction estrone 3-sulfate(out) + n H(+)(out) = estrone 3-sulfate(in) + n H(+)(in). The catalysed reaction is 25-hydroxyvitamin D3 sulfate(out) + n H(+)(out) = 25-hydroxyvitamin D3 sulfate(in) + n H(+)(in). It catalyses the reaction cholate(out) + n H(+)(out) = cholate(in) + n H(+)(in). The enzyme catalyses glycocholate(out) + n H(+)(out) = glycocholate(in) + n H(+)(in). It carries out the reaction taurocholate(out) + n H(+)(out) = taurocholate(in) + n H(+)(in). The catalysed reaction is dehydroepiandrosterone 3-sulfate(out) + n H(+)(out) = dehydroepiandrosterone 3-sulfate(in) + n H(+)(in). It catalyses the reaction N-acetyl-D-muramoyl-L-alanyl-D-isoglutamine(out) + n H(+)(out) = N-acetyl-D-muramoyl-L-alanyl-D-isoglutamine(in) + n H(+)(in). The enzyme catalyses 2',3'-cGAMP(out) + n H(+)(out) = 2',3'-cGAMP(in) + n H(+)(in). Lysosomal proton-coupled steroid conjugate and bile acid transporter. Preferentially recognizes lipophilic steroid conjugates or bile acis as endogenous substrates and seems to mediate escape from lysosomes to the cytoplasm. Modulates hepatic cytosolic copper homeostasis, maybe acting as a lysosomal copper transporter and sequestering copper ions in the lysosome. Delivers pathogen-associated molecular patterns to cytosolic pattern recognition receptors as part of the innate immune response to microbes. Selectively transports bacterial muramyl dipeptide (MDP) into the cytosol for recognition by NOD2, triggering inflammatory responses. Likely acts as a redundant importer of cyclic GMP-AMP dinucleotides (cGAMPs) in monocyte and macrophage cell lineages. The transport mechanism, its electrogenicity and stoichiometry remain to be elucidated. In Mus musculus (Mouse), this protein is Lysosomal proton-coupled steroid conjugate and bile acid symporter SLC46A3 (Slc46a3).